The sequence spans 523 residues: Sensory neuron membrane protein 1 (523 aa).

At 1–11 (MQLPRELKYAA) the chain is on the cytoplasmic side. The chain crosses the membrane as a helical span at residues 12-32 (IAGGVALFGLIFGWVLFPTIL). At 33 to 458 (KSQLKKEMAL…HQLFIPKRVV (426 aa)) the chain is on the extracellular side. The N-linked (GlcNAc...) asparagine glycan is linked to asparagine 229. Disulfide bonds link cysteine 268–cysteine 333, cysteine 297–cysteine 352, and cysteine 335–cysteine 341. N-linked (GlcNAc...) asparagine glycosylation occurs at asparagine 440. Residues 459 to 479 (GVLRWWMVSFGSLGAVIGIVF) form a helical membrane-spanning segment. The Cytoplasmic portion of the chain corresponds to 480 to 523 (HFRDHIMRLAVSGDTKVSKVIPEVEEQKDISVIGQAQEPAKVNI).

Belongs to the CD36 family.

It is found in the cell membrane. Functionally, plays an olfactory role that is not restricted to pheromone sensitivity. In Helicoverpa assulta (Oriental tobacco budworm), this protein is Sensory neuron membrane protein 1.